The primary structure comprises 277 residues: Large ribosomal subunit protein uL2 (277 aa).

The tract at residues 199-277 is disordered; it reads DHMNTSVGKA…ILISRHKRKK (79 aa). Over residues 209–220 the composition is skewed to basic residues; the sequence is GRTRWMGRRPHN.

The protein belongs to the universal ribosomal protein uL2 family. Part of the 50S ribosomal subunit. Forms a bridge to the 30S subunit in the 70S ribosome.

Functionally, one of the primary rRNA binding proteins. Required for association of the 30S and 50S subunits to form the 70S ribosome, for tRNA binding and peptide bond formation. It has been suggested to have peptidyltransferase activity; this is somewhat controversial. Makes several contacts with the 16S rRNA in the 70S ribosome. The protein is Large ribosomal subunit protein uL2 of Nitrobacter winogradskyi (strain ATCC 25391 / DSM 10237 / CIP 104748 / NCIMB 11846 / Nb-255).